Consider the following 682-residue polypeptide: Potassium-transporting ATPase ATP-binding subunit (682 aa).

4 helical membrane-spanning segments follow: residues 34–54 (PVMF…IAMA), 62–82 (ALFS…ANFA), 219–239 (IALT…TATL), and 254–274 (VLVA…LSAI). Residue aspartate 307 is the 4-aspartylphosphate intermediate of the active site. ATP-binding positions include aspartate 344, glutamate 348, 377–384 (FTAQSRMS), and lysine 395. 2 residues coordinate Mg(2+): aspartate 518 and aspartate 522. The next 3 membrane-spanning stretches (helical) occupy residues 588–608 (FAII…LNIM), 616–636 (AILS…PLAL), and 662–682 (LLVP…CGLV).

Belongs to the cation transport ATPase (P-type) (TC 3.A.3) family. Type IA subfamily. As to quaternary structure, the system is composed of three essential subunits: KdpA, KdpB and KdpC.

It is found in the cell inner membrane. It carries out the reaction K(+)(out) + ATP + H2O = K(+)(in) + ADP + phosphate + H(+). Its function is as follows. Part of the high-affinity ATP-driven potassium transport (or Kdp) system, which catalyzes the hydrolysis of ATP coupled with the electrogenic transport of potassium into the cytoplasm. This subunit is responsible for energy coupling to the transport system and for the release of the potassium ions to the cytoplasm. This chain is Potassium-transporting ATPase ATP-binding subunit, found in Escherichia coli O81 (strain ED1a).